Here is a 246-residue protein sequence, read N- to C-terminus: Serine protease 1 (246 aa).

Residues 1–17 (MKTFIFLALLGAAVAFP) form the signal peptide. The propeptide at 18-23 (VDDDDK) is activation peptide. Residues 24 to 244 (IVGGYTCGAN…YVSWIKQTIA (221 aa)) form the Peptidase S1 domain. Cystine bridges form between cysteine 30/cysteine 160, cysteine 48/cysteine 64, cysteine 132/cysteine 233, cysteine 139/cysteine 206, cysteine 171/cysteine 185, and cysteine 196/cysteine 220. Histidine 63 serves as the catalytic Charge relay system. Positions 75, 77, 80, and 85 each coordinate Ca(2+). The active-site Charge relay system is aspartate 107. Substrate contacts are provided by residues 194-195 (DS), 197-198 (QG), and serine 200. Catalysis depends on serine 200, which acts as the Charge relay system.

The protein belongs to the peptidase S1 family. Interacts with SERPINA1. The cofactor is Ca(2+). Autocatalytic cleavage after Lys-23 leads to beta-trypsin by releasing a terminal hexapeptide. Subsequent cleavage after Lys-148 leads to alpha-trypsin. Further cleavage after Lys-193 yields pseudotrypsin. A cleavage may also occur after Arg-122. Post-translationally, not sulfated on tyrosine residue(s). Synthesized in the acinar cells of the pancreas.

Its subcellular location is the secreted. It localises to the extracellular space. It carries out the reaction Preferential cleavage: Arg-|-Xaa, Lys-|-Xaa.. With respect to regulation, is inhibited by scorpion cyclotide trypsin inhibitor TopI1. The chain is Serine protease 1 (PRSS1) from Bos taurus (Bovine).